A 380-amino-acid chain; its full sequence is Succinyl-diaminopimelate desuccinylase (380 aa).

A Zn(2+)-binding site is contributed by His-69. Asp-71 is an active-site residue. Position 102 (Asp-102) interacts with Zn(2+). The active-site Proton acceptor is Glu-136. Residues Glu-137, Glu-165, and His-351 each contribute to the Zn(2+) site.

Belongs to the peptidase M20A family. DapE subfamily. In terms of assembly, homodimer. Zn(2+) is required as a cofactor. The cofactor is Co(2+).

It carries out the reaction N-succinyl-(2S,6S)-2,6-diaminopimelate + H2O = (2S,6S)-2,6-diaminopimelate + succinate. Its pathway is amino-acid biosynthesis; L-lysine biosynthesis via DAP pathway; LL-2,6-diaminopimelate from (S)-tetrahydrodipicolinate (succinylase route): step 3/3. In terms of biological role, catalyzes the hydrolysis of N-succinyl-L,L-diaminopimelic acid (SDAP), forming succinate and LL-2,6-diaminopimelate (DAP), an intermediate involved in the bacterial biosynthesis of lysine and meso-diaminopimelic acid, an essential component of bacterial cell walls. The chain is Succinyl-diaminopimelate desuccinylase from Bordetella petrii (strain ATCC BAA-461 / DSM 12804 / CCUG 43448).